We begin with the raw amino-acid sequence, 655 residues long: p-hydroxybenzoic acid efflux pump subunit AaeB (655 aa).

Helical transmembrane passes span 13–33, 38–58, 69–89, 93–113, 121–141, 152–172, 370–390, 407–427, 431–451, 459–479, and 482–502; these read FAVK…HFQL, WAVL…GGEP, LRII…IAMI, LLMI…SSLV, WGLA…EPLL, EIVI…PRSI, LFWL…IAVV, FIYG…VIIP, QSML…GIEV, MGAL…TFHF, and FLDS…VILL.

Belongs to the aromatic acid exporter ArAE (TC 2.A.85) family.

It localises to the cell inner membrane. Functionally, forms an efflux pump with AaeA. Could function as a metabolic relief valve, allowing to eliminate certain compounds when they accumulate to high levels in the cell. The sequence is that of p-hydroxybenzoic acid efflux pump subunit AaeB from Escherichia coli O81 (strain ED1a).